Here is a 307-residue protein sequence, read N- to C-terminus: Elongation factor Ts (307 aa).

The interval 80 to 83 is involved in Mg(2+) ion dislocation from EF-Tu; the sequence is TDFV.

The protein belongs to the EF-Ts family.

Its subcellular location is the cytoplasm. Associates with the EF-Tu.GDP complex and induces the exchange of GDP to GTP. It remains bound to the aminoacyl-tRNA.EF-Tu.GTP complex up to the GTP hydrolysis stage on the ribosome. This chain is Elongation factor Ts, found in Nitrobacter hamburgensis (strain DSM 10229 / NCIMB 13809 / X14).